Consider the following 567-residue polypeptide: Urease subunit alpha 1 (567 aa).

The region spanning 128-567 is the Urease domain; the sequence is GAVDTHVHYI…LPLAQLYHLF (440 aa). Ni(2+) contacts are provided by histidine 133, histidine 135, and lysine 216. N6-carboxylysine is present on lysine 216. Histidine 218 lines the substrate pocket. Residues histidine 245 and histidine 271 each coordinate Ni(2+). The active-site Proton donor is the histidine 319. Residue aspartate 359 coordinates Ni(2+).

The protein belongs to the metallo-dependent hydrolases superfamily. Urease alpha subunit family. Heterotrimer of UreA (gamma), UreB (beta) and UreC (alpha) subunits. Three heterotrimers associate to form the active enzyme. Ni cation serves as cofactor. Carboxylation allows a single lysine to coordinate two nickel ions.

The protein localises to the cytoplasm. The catalysed reaction is urea + 2 H2O + H(+) = hydrogencarbonate + 2 NH4(+). It participates in nitrogen metabolism; urea degradation; CO(2) and NH(3) from urea (urease route): step 1/1. The polypeptide is Urease subunit alpha 1 (Psychrobacter cryohalolentis (strain ATCC BAA-1226 / DSM 17306 / VKM B-2378 / K5)).